The sequence spans 266 residues: Mediator of RNA polymerase II transcription subunit 18 (266 aa).

This sequence belongs to the Mediator complex subunit 18 family. As to quaternary structure, component of the Mediator complex.

It localises to the nucleus. Its function is as follows. Component of the Mediator complex, a coactivator involved in the regulated transcription of nearly all RNA polymerase II-dependent genes. Mediator functions as a bridge to convey information from gene-specific regulatory proteins to the basal RNA polymerase II transcription machinery. Mediator is recruited to promoters by direct interactions with regulatory proteins and serves as a scaffold for the assembly of a functional preinitiation complex with RNA polymerase II and the general transcription factors. This Candida glabrata (strain ATCC 2001 / BCRC 20586 / JCM 3761 / NBRC 0622 / NRRL Y-65 / CBS 138) (Yeast) protein is Mediator of RNA polymerase II transcription subunit 18 (SRB5).